We begin with the raw amino-acid sequence, 570 residues long: MFS-type transporter pigP (570 aa).

The disordered stretch occupies residues 14–54 (GMIKKAHPEQTPPDVSHEGDVATEKGDSDGVEQAAPTGPTD). Over residues 28–41 (VSHEGDVATEKGDS) the composition is skewed to basic and acidic residues. Transmembrane regions (helical) follow at residues 65-85 (VMIM…TSII), 99-119 (LPDV…LVPL), 131-151 (WSFV…GVAT), 162-182 (VAGM…AGCV), 192-212 (GLLM…GGAF), 221-241 (CFYI…FVHI), and 263-283 (LVGF…LQYG). Asn-290 carries N-linked (GlcNAc...) asparagine glycosylation. 7 helical membrane passes run 293–313 (VVIG…LWEW), 336–356 (VVYG…PIYF), 369–389 (VYIL…GALV), 392–412 (FGYY…GNGL), 425–445 (WIGY…MPII), 455–475 (LIPV…STFL), and 533–553 (VFYL…GMGW).

The protein belongs to the major facilitator superfamily. TCR/Tet family.

It localises to the cell membrane. Functionally, MFS-type transporter; part of the gene cluster that mediates the biosynthesis of azaphilone pigments (MonAzPs), very widely used as food colorant. This Monascus ruber (Mold) protein is MFS-type transporter pigP.